The primary structure comprises 371 residues: Histidinol-phosphate aminotransferase (371 aa).

N6-(pyridoxal phosphate)lysine is present on Lys-228.

The protein belongs to the class-II pyridoxal-phosphate-dependent aminotransferase family. Histidinol-phosphate aminotransferase subfamily. Pyridoxal 5'-phosphate serves as cofactor.

The catalysed reaction is L-histidinol phosphate + 2-oxoglutarate = 3-(imidazol-4-yl)-2-oxopropyl phosphate + L-glutamate. Its pathway is amino-acid biosynthesis; L-histidine biosynthesis; L-histidine from 5-phospho-alpha-D-ribose 1-diphosphate: step 7/9. The protein is Histidinol-phosphate aminotransferase of Methanococcus maripaludis (strain C6 / ATCC BAA-1332).